Here is a 198-residue protein sequence, read N- to C-terminus: Peroxynitrite isomerase (198 aa).

The short motif at 20–26 (GVWEGTG) is the GXWXGXG element. His189 provides a ligand contact to heme b.

It belongs to the nitrobindin family. As to quaternary structure, homodimer. Requires heme b as cofactor.

The enzyme catalyses peroxynitrite = nitrate. It functions in the pathway nitrogen metabolism. In terms of biological role, heme-binding protein able to scavenge peroxynitrite and to protect free L-tyrosine against peroxynitrite-mediated nitration, by acting as a peroxynitrite isomerase that converts peroxynitrite to nitrate. Therefore, this protein likely plays a role in peroxynitrite sensing and in the detoxification of reactive nitrogen and oxygen species (RNS and ROS, respectively). Is able to bind nitric oxide (NO) in vitro, but may act as a sensor of peroxynitrite levels in vivo. The chain is Peroxynitrite isomerase from Leifsonia xyli subsp. xyli (strain CTCB07).